Consider the following 278-residue polypeptide: Large ribosomal subunit protein uL2 (278 aa).

Disordered regions lie at residues Met-1–Asp-20, Thr-25–His-58, and Gly-223–Arg-278. Over residues Leu-37–His-58 the composition is skewed to basic residues. Residues Pro-253 to Ile-268 are compositionally biased toward basic and acidic residues. Positions Val-269–Arg-278 are enriched in basic residues.

This sequence belongs to the universal ribosomal protein uL2 family. In terms of assembly, part of the 50S ribosomal subunit. Forms a bridge to the 30S subunit in the 70S ribosome.

One of the primary rRNA binding proteins. Required for association of the 30S and 50S subunits to form the 70S ribosome, for tRNA binding and peptide bond formation. It has been suggested to have peptidyltransferase activity; this is somewhat controversial. Makes several contacts with the 16S rRNA in the 70S ribosome. The chain is Large ribosomal subunit protein uL2 from Mycolicibacterium smegmatis (strain ATCC 700084 / mc(2)155) (Mycobacterium smegmatis).